The following is a 444-amino-acid chain: Phosphoglucosamine mutase (444 aa).

The Phosphoserine intermediate role is filled by S102. S102, D241, D243, and D245 together coordinate Mg(2+). S102 carries the post-translational modification Phosphoserine.

Belongs to the phosphohexose mutase family. It depends on Mg(2+) as a cofactor. Activated by phosphorylation.

The enzyme catalyses alpha-D-glucosamine 1-phosphate = D-glucosamine 6-phosphate. Functionally, catalyzes the conversion of glucosamine-6-phosphate to glucosamine-1-phosphate. This is Phosphoglucosamine mutase from Pasteurella multocida (strain Pm70).